Reading from the N-terminus, the 192-residue chain is uncharacterized protein (192 aa).

A Nudix hydrolase domain is found at 29-160 (HRQAAVLIPI…PLDIYRRGDS (132 aa)). The Nudix box motif lies at 67–89 (GAVDDTDTSVIAAALREAEEEVA). Positions 83 and 87 each coordinate Mg(2+).

This sequence belongs to the Nudix hydrolase family. PCD1 subfamily. It depends on Mn(2+) as a cofactor. The cofactor is Mg(2+).

Functionally, probably mediates the hydrolysis of some nucleoside diphosphate derivatives. This is an uncharacterized protein from Escherichia coli O6:H1 (strain CFT073 / ATCC 700928 / UPEC).